The following is a 296-amino-acid chain: ATP phosphoribosyltransferase (296 aa).

It belongs to the ATP phosphoribosyltransferase family. Long subfamily. Requires Mg(2+) as cofactor.

Its subcellular location is the cytoplasm. It catalyses the reaction 1-(5-phospho-beta-D-ribosyl)-ATP + diphosphate = 5-phospho-alpha-D-ribose 1-diphosphate + ATP. Its pathway is amino-acid biosynthesis; L-histidine biosynthesis; L-histidine from 5-phospho-alpha-D-ribose 1-diphosphate: step 1/9. With respect to regulation, feedback inhibited by histidine. Functionally, catalyzes the condensation of ATP and 5-phosphoribose 1-diphosphate to form N'-(5'-phosphoribosyl)-ATP (PR-ATP). Has a crucial role in the pathway because the rate of histidine biosynthesis seems to be controlled primarily by regulation of HisG enzymatic activity. The polypeptide is ATP phosphoribosyltransferase (Halorubrum lacusprofundi (strain ATCC 49239 / DSM 5036 / JCM 8891 / ACAM 34)).